A 930-amino-acid polypeptide reads, in one-letter code: Protocadherin gamma-A4 (930 aa).

An N-terminal signal peptide occupies residues 1 to 27; it reads MAAPYKSDRRGLIWICIFLGSLCDIRA. Cadherin domains lie at 28 to 132, 133 to 241, 242 to 346, 347 to 451, 452 to 561, and 569 to 682; these read EQIR…APSF, GAQQ…APVF, TQPE…APEV, TVTS…PPTF, THAS…TPEI, and DGST…APID. Residues 28-691 are Extracellular-facing; sequence EQIRYSVPEE…DQEDSDITLY (664 aa). 2 N-linked (GlcNAc...) asparagine glycosylation sites follow: Asn-418 and Asn-544. Residues 692–712 form a helical membrane-spanning segment; the sequence is LVVAVAAVSCVFLAFVIVLLI. At 713–930 the chain is on the cytoplasmic side; it reads HRLRRWHSTR…KKKSGKKEKK (218 aa). 2 disordered regions span residues 803–839 and 900–930; these read SSLQ…WPNN and ATLT…KEKK. Residues 920-930 show a composition bias toward basic residues; it reads NKKKSGKKEKK.

The protein localises to the cell membrane. Its function is as follows. Potential calcium-dependent cell-adhesion protein. May be involved in the establishment and maintenance of specific neuronal connections in the brain. The polypeptide is Protocadherin gamma-A4 (Mus musculus (Mouse)).